Reading from the N-terminus, the 317-residue chain is Apolipoprotein E (317 aa).

A signal peptide spans 1 to 18; sequence MRVLWVALVVTLLAGCRT. 8 repeat units span residues 79–100, 101–122, 123–144, 145–166, 167–188, 189–210, 211–232, and 233–254. Positions 79–254 are 8 X 22 AA approximate tandem repeats; it reads ELIEESMKEV…RLDEMRDELE (176 aa). Position 142 is a methionine sulfoxide (methionine 142). Residues 157–167 form an LDL and other lipoprotein receptors binding region; that stretch reads HLRNVRKRLVR. Heparin is bound at residue 161–164; sequence VRKR. Positions 209 to 289 are lipid-binding and lipoprotein association; sequence AATLSTRAGQ…GWFEPLVEDM (81 aa). 228–235 provides a ligand contact to heparin; the sequence is GQKLRGRL. The homooligomerization stretch occupies residues 265–317; that stretch reads SQLRLQAEAFQARLKGWFEPLVEDMRRQWAGLVERMQSAVSISSSTSAPSDNQ. Residues 277–289 are specificity for association with VLDL; sequence RLKGWFEPLVEDM.

Belongs to the apolipoprotein A1/A4/E family. Homotetramer. May interact with ABCA1; functionally associated with ABCA1 in the biogenesis of HDLs. May interact with APP/A4 amyloid-beta peptide; the interaction is extremely stable in vitro but its physiological significance is unclear. May interact with MAPT. May interact with MAP2. In the cerebrospinal fluid, interacts with secreted SORL1. Interacts with PMEL; this allows the loading of PMEL luminal fragment on ILVs to induce fibril nucleation. APOE exists as multiple glycosylated and sialylated glycoforms within cells and in plasma. The extent of glycosylation and sialylation are tissue and context specific. In terms of processing, glycated in plasma VLDL. Post-translationally, phosphorylated by FAM20C in the extracellular medium.

The protein resides in the secreted. It is found in the extracellular space. The protein localises to the extracellular matrix. Its subcellular location is the extracellular vesicle. It localises to the endosome. The protein resides in the multivesicular body. Functionally, APOE is an apolipoprotein, a protein associating with lipid particles, that mainly functions in lipoprotein-mediated lipid transport between organs via the plasma and interstitial fluids. APOE is a core component of plasma lipoproteins and is involved in their production, conversion and clearance. Apolipoproteins are amphipathic molecules that interact both with lipids of the lipoprotein particle core and the aqueous environment of the plasma. As such, APOE associates with chylomicrons, chylomicron remnants, very low density lipoproteins (VLDL) and intermediate density lipoproteins (IDL) but shows a preferential binding to high-density lipoproteins (HDL). It also binds a wide range of cellular receptors including the LDL receptor/LDLR and the very low-density lipoprotein receptor/VLDLR that mediate the cellular uptake of the APOE-containing lipoprotein particles. Finally, APOE also has a heparin-binding activity and binds heparan-sulfate proteoglycans on the surface of cells, a property that supports the capture and the receptor-mediated uptake of APOE-containing lipoproteins by cells. The sequence is that of Apolipoprotein E (APOE) from Sus scrofa (Pig).